A 438-amino-acid chain; its full sequence is Innexin inx7 (438 aa).

At 1-23 (MLNTFSSVRQYLKFDLTRVVIDN) the chain is on the cytoplasmic side. A helical membrane pass occupies residues 24 to 44 (IVFKLHYRWTFVILLVATLLI). The Extracellular portion of the chain corresponds to 45–58 (TSRQYIGEHIQCLS). The helical transmembrane segment at 59–79 (DGVVSPVINTFCFFTPTFTVV) threads the bilayer. Topologically, residues 80–112 (RDQNQTAYRPGSEPPGIGAFDPEKDTIKRHAYY) are cytoplasmic. A helical membrane pass occupies residues 113 to 133 (QWVPFVLFFQALCFYIPHALW). Topologically, residues 134-283 (KSWEGGRIKA…VMALNIMNEK (150 aa)) are extracellular. Residues 284-304 (IYIILWFWYAFLLIVTVLGLL) traverse the membrane as a helical segment. Over 305 to 438 (WRILTLCFYR…STSDMAKLPV (134 aa)) the chain is Cytoplasmic. Disordered stretches follow at residues 381-402 (NDVN…PELS) and 415-438 (RRNG…KLPV). A compositionally biased stretch (low complexity) spans 418–431 (GSPSAGGAQGPSTS).

It belongs to the pannexin family. Expressed around gut lobes in embryonic stages 15-17.

The protein resides in the cell membrane. The protein localises to the cell junction. It localises to the gap junction. Structural components of the gap junctions. This chain is Innexin inx7 (Inx7), found in Drosophila melanogaster (Fruit fly).